We begin with the raw amino-acid sequence, 341 residues long: C2 calcium-dependent domain-containing protein 4D (341 aa).

The span at R56 to P71 shows a compositional bias: basic and acidic residues. 2 disordered regions span residues R56 to N75 and C134 to P176. The span at S139 to P149 shows a compositional bias: low complexity. Residues R205–G331 enclose the C2 domain.

This chain is C2 calcium-dependent domain-containing protein 4D (C2cd4d), found in Mus musculus (Mouse).